The following is a 599-amino-acid chain: Elongation factor 4 (599 aa).

One can recognise a tr-type G domain in the interval 4–186 (DNIRNFSIIA…EIVNKIPPPR (183 aa)). GTP contacts are provided by residues 16–21 (DHGKST) and 133–136 (NKID).

Belongs to the TRAFAC class translation factor GTPase superfamily. Classic translation factor GTPase family. LepA subfamily.

It is found in the cell inner membrane. It carries out the reaction GTP + H2O = GDP + phosphate + H(+). Functionally, required for accurate and efficient protein synthesis under certain stress conditions. May act as a fidelity factor of the translation reaction, by catalyzing a one-codon backward translocation of tRNAs on improperly translocated ribosomes. Back-translocation proceeds from a post-translocation (POST) complex to a pre-translocation (PRE) complex, thus giving elongation factor G a second chance to translocate the tRNAs correctly. Binds to ribosomes in a GTP-dependent manner. The protein is Elongation factor 4 of Geotalea daltonii (strain DSM 22248 / JCM 15807 / FRC-32) (Geobacter daltonii).